We begin with the raw amino-acid sequence, 214 residues long: Adenylate kinase (214 aa).

10 to 15 contacts ATP; that stretch reads GAGKGT. The NMP stretch occupies residues 30–59; it reads STGDMFRDHKARGTELGKTVQAIMDAGGLV. AMP-binding positions include Thr-31, Arg-36, 57 to 59, 85 to 88, and Gln-92; these read GLV and GYPR. The segment at 126–163 is LID; sequence GRRSCPKCGAVYHVSANPPRRMGYCDRDDAGLVQRDDD. Arg-127 provides a ligand contact to ATP. Residues Cys-130 and Cys-133 each coordinate Zn(2+). Residue 136–137 participates in ATP binding; the sequence is VY. Zn(2+) contacts are provided by Cys-150 and Asp-153. AMP is bound by residues Arg-160 and Arg-171. Residue Gly-199 coordinates ATP.

This sequence belongs to the adenylate kinase family. As to quaternary structure, monomer.

The protein localises to the cytoplasm. It catalyses the reaction AMP + ATP = 2 ADP. It participates in purine metabolism; AMP biosynthesis via salvage pathway; AMP from ADP: step 1/1. Catalyzes the reversible transfer of the terminal phosphate group between ATP and AMP. Plays an important role in cellular energy homeostasis and in adenine nucleotide metabolism. In Anaeromyxobacter sp. (strain Fw109-5), this protein is Adenylate kinase.